The following is a 126-amino-acid chain: Glycine cleavage system H protein (126 aa).

The 83-residue stretch at 20–102 (IGTIGITDYA…LGDGWFFKVR (83 aa)) folds into the Lipoyl-binding domain. K61 carries the N6-lipoyllysine modification.

This sequence belongs to the GcvH family. In terms of assembly, the glycine cleavage system is composed of four proteins: P, T, L and H. The cofactor is (R)-lipoate.

Functionally, the glycine cleavage system catalyzes the degradation of glycine. The H protein shuttles the methylamine group of glycine from the P protein to the T protein. The protein is Glycine cleavage system H protein of Rhodospirillum rubrum (strain ATCC 11170 / ATH 1.1.1 / DSM 467 / LMG 4362 / NCIMB 8255 / S1).